The sequence spans 423 residues: Putative competence-damage inducible protein (423 aa).

This sequence belongs to the CinA family.

In Streptococcus pyogenes serotype M2 (strain MGAS10270), this protein is Putative competence-damage inducible protein.